The sequence spans 323 residues: Glucokinase (323 aa).

8 to 13 (GDVGGT) contributes to the ATP binding site.

The protein belongs to the bacterial glucokinase family.

It is found in the cytoplasm. It catalyses the reaction D-glucose + ATP = D-glucose 6-phosphate + ADP + H(+). The polypeptide is Glucokinase (Yersinia pseudotuberculosis serotype I (strain IP32953)).